A 285-amino-acid chain; its full sequence is Small ribosomal subunit protein uS2 (285 aa).

Residues 229 to 285 (RHNGKSNAAEEPMAEWERELLEQHEEQKSQDAAPAEQSAPAAEAPAETEQKDAPAAE) are disordered. Over residues 243–257 (EWERELLEQHEEQKS) the composition is skewed to basic and acidic residues. The segment covering 260 to 275 (AAPAEQSAPAAEAPAE) has biased composition (low complexity). Basic and acidic residues predominate over residues 276–285 (TEQKDAPAAE).

This sequence belongs to the universal ribosomal protein uS2 family.

This is Small ribosomal subunit protein uS2 from Kocuria rhizophila (strain ATCC 9341 / DSM 348 / NBRC 103217 / DC2201).